The primary structure comprises 125 residues: UPF0738 protein GTNG_0708 (125 aa).

The protein belongs to the UPF0738 family.

This chain is UPF0738 protein GTNG_0708, found in Geobacillus thermodenitrificans (strain NG80-2).